An 80-amino-acid polypeptide reads, in one-letter code: Mitotic-spindle organizing protein 1 (80 aa).

The protein belongs to the MOZART1 family. In terms of assembly, part of the gamma-tubulin complex.

It is found in the cytoplasm. Its subcellular location is the cytoskeleton. The protein localises to the microtubule organizing center. The protein resides in the spindle pole body. Its function is as follows. Required for gamma-tubulin complex recruitment to the microtubule organizing center (MTOC). In Pyricularia oryzae (strain 70-15 / ATCC MYA-4617 / FGSC 8958) (Rice blast fungus), this protein is Mitotic-spindle organizing protein 1.